Here is a 268-residue protein sequence, read N- to C-terminus: Interleukin-1 alpha (268 aa).

Positions Met1–Arg112 are excised as a propeptide. Residue Lys82 is modified to N6-acetyllysine. Residues Lys82–Leu86 form a nuclear localization signal (NLS) region. Ser87 is modified (phosphoserine). N-linked (GlcNAc...) asparagine glycans are attached at residues Asn102 and Asn141.

The protein belongs to the IL-1 family. Monomer. Interacts with TMED10; the interaction mediates the translocation from the cytoplasm into the ERGIC (endoplasmic reticulum-Golgi intermediate compartment) and thereby secretion. Interacts with IL1R1. Interacts with S100A13; this interaction is the first step in the export of IL1A, followed by direct translocation of this complex across the plasma membrane. Acetylated within its nuclear localization sequence, which impacts subcellular localization. Post-translationally, proteolytic processed by CAPN1 in a calcium-dependent manner. Cleavage from 31 kDa precursor to 18 kDa biologically active molecules. In terms of processing, phosphorylated. Phosphorylation greatly enhances susceptibility to digestion and promotes the conversion of pre-IL1A alpha to the biologically active IL1A.

Its subcellular location is the nucleus. It is found in the cytoplasm. The protein localises to the secreted. Cytokine constitutively present intracellularly in nearly all resting non-hematopoietic cells that plays an important role in inflammation and bridges the innate and adaptive immune systems. After binding to its receptor IL1R1 together with its accessory protein IL1RAP, forms the high affinity interleukin-1 receptor complex. Signaling involves the recruitment of adapter molecules such as MYD88, IRAK1 or IRAK4. In turn, mediates the activation of NF-kappa-B and the three MAPK pathways p38, p42/p44 and JNK pathways. Within the cell, acts as an alarmin and cell death results in its liberation in the extracellular space after disruption of the cell membrane to induce inflammation and alert the host to injury or damage. In addition to its role as a danger signal, which occurs when the cytokine is passively released by cell necrosis, directly senses DNA damage and acts as signal for genotoxic stress without loss of cell integrity. This chain is Interleukin-1 alpha (IL1A), found in Lama glama (Llama).